Consider the following 865-residue polypeptide: Nicotinate catabolism cluster-specific transcription factor (865 aa).

2 consecutive C2H2-type zinc fingers follow at residues 8-32 (HACT…SLNH) and 41-63 (YTCQ…LDRH). Residues 74 to 168 (GKGVLETRKR…SIDDDGTDPD (95 aa)) form a disordered region. A Nuclear localization signal(NLS) motif is present at residues 77-87 (VLETRKRMRRA). Positions 78–89 (LETRKRMRRAED) are enriched in basic and acidic residues. Residues 96–105 (PPKRPSRHQQ) show a composition bias toward basic residues. A compositionally biased stretch (low complexity) spans 108–132 (GPPVGAPLSSSGSVSAGSGRSSRSP). The Nuclear export signal (NES) signature appears at 285-289 (LDIDL).

The protein localises to the nucleus. Its function is as follows. Transcription factor that specifically regulates the expression of the hxn gene cluster that mediates the degradation of nicotinate and related metabolites. This chain is Nicotinate catabolism cluster-specific transcription factor, found in Emericella nidulans (strain FGSC A4 / ATCC 38163 / CBS 112.46 / NRRL 194 / M139) (Aspergillus nidulans).